Reading from the N-terminus, the 1025-residue chain is Putative calcium-transporting ATPase 11, plasma membrane-type (1025 aa).

Topologically, residues methionine 1 to serine 157 are cytoplasmic. An interaction with calmodulin region spans residues alanine 19–valine 30. Residues phenylalanine 158 to alanine 178 traverse the membrane as a helical segment. Residues valine 179 to tyrosine 196 lie on the Lumenal side of the membrane. A helical transmembrane segment spans residues aspartate 197–tyrosine 217. Residues lysine 218–leucine 345 are Cytoplasmic-facing. The helical transmembrane segment at asparagine 346 to valine 365 threads the bilayer. Residues valine 366–tyrosine 395 are Lumenal-facing. Residues phenylalanine 396–leucine 413 traverse the membrane as a helical segment. Topologically, residues alanine 414–isoleucine 801 are cytoplasmic. Aspartate 451 acts as the 4-aspartylphosphate intermediate in catalysis. Residues aspartate 746 and aspartate 750 each contribute to the Mg(2+) site. Residues glutamine 802–phenylalanine 820 form a helical membrane-spanning segment. Over valine 821–leucine 831 the chain is Lumenal. A helical transmembrane segment spans residues threonine 832–alanine 852. Residues threonine 853–phenylalanine 872 are Cytoplasmic-facing. Residues isoleucine 873–leucine 895 form a helical membrane-spanning segment. At asparagine 896–glycine 907 the chain is on the lumenal side. The helical transmembrane segment at proline 908–asparagine 929 threads the bilayer. The Cytoplasmic portion of the chain corresponds to glutamate 930 to lysine 947. Residues serine 948–leucine 969 form a helical membrane-spanning segment. Residues glycine 970–serine 979 are Lumenal-facing. The chain crosses the membrane as a helical span at residues tryptophan 980–lysine 1001. Topologically, residues cysteine 1002 to alanine 1025 are cytoplasmic.

This sequence belongs to the cation transport ATPase (P-type) (TC 3.A.3) family. Type IIB subfamily.

The protein localises to the membrane. It carries out the reaction Ca(2+)(in) + ATP + H2O = Ca(2+)(out) + ADP + phosphate + H(+). Activated by calmodulin. In terms of biological role, this magnesium-dependent enzyme catalyzes the hydrolysis of ATP coupled with the translocation of calcium from the cytosol out of the cell or into organelles. This is Putative calcium-transporting ATPase 11, plasma membrane-type (ACA11) from Arabidopsis thaliana (Mouse-ear cress).